Here is a 260-residue protein sequence, read N- to C-terminus: Troponin I 3 (260 aa).

The segment covering 192–219 has biased composition (basic and acidic residues); the sequence is DLDEIMAKKKGTADGKPEWSKKEKKEEE. The disordered stretch occupies residues 192 to 260; sequence DLDEIMAKKK…EEEEEEEEEE (69 aa). Over residues 231-260 the composition is skewed to acidic residues; it reads PEAEPEPEAAEPAAEEPEAEEEEEEEEEEE.

This sequence belongs to the troponin I family. In terms of tissue distribution, expressed in body wall muscle from first larval stage to adult. In adults expression is predominantly in vulval and anal muscles, body wall muscle expression is weaker. Also expressed in vulval muscles of hermaphrodites and the sex muscles of males.

Functionally, troponin I is the inhibitory subunit of troponin, the thin filament regulatory complex which confers calcium-sensitivity to muscle actomyosin ATPase activity. This Caenorhabditis elegans protein is Troponin I 3 (tni-3).